We begin with the raw amino-acid sequence, 763 residues long: 5-methyltetrahydropteroyltriglutamate--homocysteine methyltransferase (763 aa).

Residues 16-19 and K121 each bind 5-methyltetrahydropteroyltri-L-glutamate; that span reads RELK. Residues 440-442 and E493 contribute to the L-homocysteine site; that span reads IGS. L-methionine contacts are provided by residues 440-442 and E493; that span reads IGS. Residues 524–525 and W570 each bind 5-methyltetrahydropteroyltri-L-glutamate; that span reads RC. D608 serves as a coordination point for L-homocysteine. D608 contacts L-methionine. Residue E614 participates in 5-methyltetrahydropteroyltri-L-glutamate binding. 3 residues coordinate Zn(2+): H650, C652, and E674. Catalysis depends on H703, which acts as the Proton donor. C735 provides a ligand contact to Zn(2+).

It belongs to the vitamin-B12 independent methionine synthase family. Zn(2+) serves as cofactor.

The catalysed reaction is 5-methyltetrahydropteroyltri-L-glutamate + L-homocysteine = tetrahydropteroyltri-L-glutamate + L-methionine. Its pathway is amino-acid biosynthesis; L-methionine biosynthesis via de novo pathway; L-methionine from L-homocysteine (MetE route): step 1/1. Catalyzes the transfer of a methyl group from 5-methyltetrahydrofolate to homocysteine resulting in methionine formation. The chain is 5-methyltetrahydropteroyltriglutamate--homocysteine methyltransferase from Paraburkholderia phymatum (strain DSM 17167 / CIP 108236 / LMG 21445 / STM815) (Burkholderia phymatum).